Here is a 247-residue protein sequence, read N- to C-terminus: Uridylate kinase (247 aa).

17–20 (KFSG) contacts ATP. Gly59 contacts UMP. The ATP site is built by Gly60 and Arg64. UMP-binding positions include Asp79 and 140–147 (TGNPFFTT). Residues Thr167, Tyr173, and Asp176 each contribute to the ATP site.

It belongs to the UMP kinase family. In terms of assembly, homohexamer.

The protein resides in the cytoplasm. It catalyses the reaction UMP + ATP = UDP + ADP. It participates in pyrimidine metabolism; CTP biosynthesis via de novo pathway; UDP from UMP (UMPK route): step 1/1. With respect to regulation, inhibited by UTP. Catalyzes the reversible phosphorylation of UMP to UDP. This chain is Uridylate kinase, found in Legionella pneumophila subsp. pneumophila (strain Philadelphia 1 / ATCC 33152 / DSM 7513).